The following is a 342-amino-acid chain: Tetraacyldisaccharide 4'-kinase (342 aa).

68-75 provides a ligand contact to ATP; sequence TVGGTGKT.

Belongs to the LpxK family.

The catalysed reaction is a lipid A disaccharide + ATP = a lipid IVA + ADP + H(+). Its pathway is glycolipid biosynthesis; lipid IV(A) biosynthesis; lipid IV(A) from (3R)-3-hydroxytetradecanoyl-[acyl-carrier-protein] and UDP-N-acetyl-alpha-D-glucosamine: step 6/6. Its function is as follows. Transfers the gamma-phosphate of ATP to the 4'-position of a tetraacyldisaccharide 1-phosphate intermediate (termed DS-1-P) to form tetraacyldisaccharide 1,4'-bis-phosphate (lipid IVA). This chain is Tetraacyldisaccharide 4'-kinase, found in Burkholderia multivorans (strain ATCC 17616 / 249).